Reading from the N-terminus, the 518-residue chain is UDP-N-acetylmuramate--L-alanine ligase (518 aa).

Residue 158-164 (GTHGKTT) participates in ATP binding.

This sequence belongs to the MurCDEF family.

It is found in the cytoplasm. The catalysed reaction is UDP-N-acetyl-alpha-D-muramate + L-alanine + ATP = UDP-N-acetyl-alpha-D-muramoyl-L-alanine + ADP + phosphate + H(+). It participates in cell wall biogenesis; peptidoglycan biosynthesis. Functionally, cell wall formation. This is UDP-N-acetylmuramate--L-alanine ligase from Crocosphaera subtropica (strain ATCC 51142 / BH68) (Cyanothece sp. (strain ATCC 51142)).